Here is a 255-residue protein sequence, read N- to C-terminus: uncharacterized protein (255 aa).

[4Fe-4S] cluster-binding residues include C122 and C160.

As to quaternary structure, homodimer. The cofactor is [4Fe-4S] cluster.

This is an uncharacterized protein from Escherichia coli (strain K12).